The chain runs to 1356 residues: DNA-directed RNA polymerase subunit beta (1356 aa).

This sequence belongs to the RNA polymerase beta chain family. The RNAP catalytic core consists of 2 alpha, 1 beta, 1 beta' and 1 omega subunit. When a sigma factor is associated with the core the holoenzyme is formed, which can initiate transcription.

It carries out the reaction RNA(n) + a ribonucleoside 5'-triphosphate = RNA(n+1) + diphosphate. Its function is as follows. DNA-dependent RNA polymerase catalyzes the transcription of DNA into RNA using the four ribonucleoside triphosphates as substrates. This Stutzerimonas stutzeri (strain A1501) (Pseudomonas stutzeri) protein is DNA-directed RNA polymerase subunit beta.